A 907-amino-acid chain; its full sequence is Protein translocase subunit SecA (907 aa).

ATP contacts are provided by residues Q87, 105–109 (GEGKT), and D506. Positions 834-850 (LEQQREEEAREQAEKMK) are enriched in basic and acidic residues. Residues 834 to 907 (LEQQREEEAR…KYKQCHGKIE (74 aa)) are disordered. Low complexity predominate over residues 864-875 (QPQPSQQQGEQP). C891, C893, C902, and H903 together coordinate Zn(2+). Basic residues predominate over residues 897 to 907 (KKYKQCHGKIE).

The protein belongs to the SecA family. Monomer and homodimer. Part of the essential Sec protein translocation apparatus which comprises SecA, SecYEG and auxiliary proteins SecDF-YajC and YidC. Zn(2+) serves as cofactor.

It is found in the cell inner membrane. It localises to the cytoplasm. It carries out the reaction ATP + H2O + cellular proteinSide 1 = ADP + phosphate + cellular proteinSide 2.. In terms of biological role, part of the Sec protein translocase complex. Interacts with the SecYEG preprotein conducting channel. Has a central role in coupling the hydrolysis of ATP to the transfer of proteins into and across the cell membrane, serving both as a receptor for the preprotein-SecB complex and as an ATP-driven molecular motor driving the stepwise translocation of polypeptide chains across the membrane. This chain is Protein translocase subunit SecA, found in Alcanivorax borkumensis (strain ATCC 700651 / DSM 11573 / NCIMB 13689 / SK2).